Here is a 523-residue protein sequence, read N- to C-terminus: Flavonoid 3',5'-hydroxylase (523 aa).

Residue cysteine 460 participates in heme binding.

This sequence belongs to the cytochrome P450 family. The cofactor is heme.

It catalyses the reaction a 3',5'-unsubstituted flavanone + 2 reduced [NADPH--hemoprotein reductase] + 2 O2 = a 3',5'-dihydroxyflavanone + 2 oxidized [NADPH--hemoprotein reductase] + 2 H2O + 2 H(+). It participates in pigment biosynthesis; anthocyanin biosynthesis. In terms of biological role, catalyzes the 3'5'-hydroxylation of naringenin and eriodictyol to form 5,7,3,'4',5'-pentahydroxyflavanone and 3',5'-hydroxylation of dihydrokaempferol and dihydroquercetin to form dihydromyricetin. This chain is Flavonoid 3',5'-hydroxylase (CYP75A6), found in Campanula medium (Canterbury bells).